Here is a 435-residue protein sequence, read N- to C-terminus: D-amino acid dehydrogenase (435 aa).

3–17 (VLILGSGVIGTTSAW) is an FAD binding site.

This sequence belongs to the DadA oxidoreductase family. Requires FAD as cofactor.

It catalyses the reaction a D-alpha-amino acid + A + H2O = a 2-oxocarboxylate + AH2 + NH4(+). It participates in amino-acid degradation; D-alanine degradation; NH(3) and pyruvate from D-alanine: step 1/1. Its function is as follows. Oxidative deamination of D-amino acids. The polypeptide is D-amino acid dehydrogenase (Xylella fastidiosa (strain M12)).